An 87-amino-acid polypeptide reads, in one-letter code: Small ribosomal subunit protein uS17 (87 aa).

The protein belongs to the universal ribosomal protein uS17 family. As to quaternary structure, part of the 30S ribosomal subunit.

One of the primary rRNA binding proteins, it binds specifically to the 5'-end of 16S ribosomal RNA. This chain is Small ribosomal subunit protein uS17, found in Oceanobacillus iheyensis (strain DSM 14371 / CIP 107618 / JCM 11309 / KCTC 3954 / HTE831).